The following is a 466-amino-acid chain: Argininosuccinate lyase 1 (466 aa).

This sequence belongs to the lyase 1 family. Argininosuccinate lyase subfamily.

It localises to the cytoplasm. It catalyses the reaction 2-(N(omega)-L-arginino)succinate = fumarate + L-arginine. It functions in the pathway amino-acid biosynthesis; L-arginine biosynthesis; L-arginine from L-ornithine and carbamoyl phosphate: step 3/3. This chain is Argininosuccinate lyase 1, found in Mesorhizobium japonicum (strain LMG 29417 / CECT 9101 / MAFF 303099) (Mesorhizobium loti (strain MAFF 303099)).